Here is a 443-residue protein sequence, read N- to C-terminus: Trigger factor (443 aa).

The 86-residue stretch at 161-246 (ADGVTITYHG…VISVTAPRLP (86 aa)) folds into the PPIase FKBP-type domain.

It belongs to the FKBP-type PPIase family. Tig subfamily.

The protein resides in the cytoplasm. It carries out the reaction [protein]-peptidylproline (omega=180) = [protein]-peptidylproline (omega=0). Functionally, involved in protein export. Acts as a chaperone by maintaining the newly synthesized protein in an open conformation. Functions as a peptidyl-prolyl cis-trans isomerase. In Nitrosococcus oceani (strain ATCC 19707 / BCRC 17464 / JCM 30415 / NCIMB 11848 / C-107), this protein is Trigger factor.